Here is a 149-residue protein sequence, read N- to C-terminus: UPF0179 protein TON_1048 (149 aa).

This sequence belongs to the UPF0179 family.

The protein is UPF0179 protein TON_1048 of Thermococcus onnurineus (strain NA1).